The sequence spans 310 residues: Tagatose-6-phosphate kinase (310 aa).

It belongs to the carbohydrate kinase PfkB family. LacC subfamily.

The catalysed reaction is D-tagatofuranose 6-phosphate + ATP = D-tagatofuranose 1,6-bisphosphate + ADP + H(+). Its pathway is carbohydrate metabolism; D-tagatose 6-phosphate degradation; D-glyceraldehyde 3-phosphate and glycerone phosphate from D-tagatose 6-phosphate: step 1/2. The protein is Tagatose-6-phosphate kinase of Streptococcus agalactiae serotype Ia (strain ATCC 27591 / A909 / CDC SS700).